Consider the following 144-residue polypeptide: NADH-ubiquinone oxidoreductase chain 6 (144 aa).

Transmembrane regions (helical) follow at residues 1–21 (MLGSFFFLAIISCVMSYINVD), 26–46 (SFFLIFSLLMVMPLISFFLHV), 47–67 (WFSYFICLLFLSGIFVILVYF), 76–96 (VVTPFYFVGGVLSVFFFYPFF), and 108–128 (FYFSVYWMLLVWVIFVLIFFM).

It belongs to the complex I subunit 6 family.

Its subcellular location is the mitochondrion membrane. The catalysed reaction is a ubiquinone + NADH + 5 H(+)(in) = a ubiquinol + NAD(+) + 4 H(+)(out). Its function is as follows. Core subunit of the mitochondrial membrane respiratory chain NADH dehydrogenase (Complex I) that is believed to belong to the minimal assembly required for catalysis. Complex I functions in the transfer of electrons from NADH to the respiratory chain. The immediate electron acceptor for the enzyme is believed to be ubiquinone. This chain is NADH-ubiquinone oxidoreductase chain 6 (ND6), found in Ascaris suum (Pig roundworm).